The sequence spans 348 residues: Dihydroorotase (348 aa).

Histidine 17 and histidine 19 together coordinate Zn(2+). Substrate contacts are provided by residues 19–21 and asparagine 45; that span reads HLR. Lysine 103, histidine 140, and histidine 178 together coordinate Zn(2+). Residue lysine 103 is modified to N6-carboxylysine. Histidine 140 serves as a coordination point for substrate. Leucine 223 provides a ligand contact to substrate. Aspartate 251 contacts Zn(2+). Residue aspartate 251 is part of the active site. Histidine 255 and alanine 267 together coordinate substrate.

This sequence belongs to the metallo-dependent hydrolases superfamily. DHOase family. Class II DHOase subfamily. In terms of assembly, homodimer. Zn(2+) is required as a cofactor.

It catalyses the reaction (S)-dihydroorotate + H2O = N-carbamoyl-L-aspartate + H(+). Its pathway is pyrimidine metabolism; UMP biosynthesis via de novo pathway; (S)-dihydroorotate from bicarbonate: step 3/3. Its function is as follows. Catalyzes the reversible cyclization of carbamoyl aspartate to dihydroorotate. This chain is Dihydroorotase, found in Escherichia coli O17:K52:H18 (strain UMN026 / ExPEC).